Consider the following 132-residue polypeptide: Small ribosomal subunit protein uS8 (132 aa).

Belongs to the universal ribosomal protein uS8 family. As to quaternary structure, part of the 30S ribosomal subunit. Contacts proteins S5 and S12.

Its function is as follows. One of the primary rRNA binding proteins, it binds directly to 16S rRNA central domain where it helps coordinate assembly of the platform of the 30S subunit. This Sinorhizobium fredii (strain NBRC 101917 / NGR234) protein is Small ribosomal subunit protein uS8.